We begin with the raw amino-acid sequence, 1038 residues long: MMAAEAGSEEGGPATAGTGGAAATGSSAYPAACRVKLPAAPPMAVAPCPGLADTDLAAALGGGAASGSGFLGTGPVSGVLGGAALTGGAAAGVAGAAAAGPAGDIALTKGTLSLPAETLGPGGGFPPLPPPPLLPPLGSGLGTVDEGDSLDGPEYEEEEVAIPLTAPPTNQWYHGKLDRTIAEERLRQAGKSGSYLIRESDRRPGSFVLSFLSQTNVVNHFRIIAMCGDYYIGGRRFSSLSDLIGYYSHVSCLLKGEKLLYPVAPPEPVEDRRRVRAILPYTKVPDTDEISFLKGDMFIVHNELEDGWMWVTNLRTDEQGLIVEDLVEEVGREEDPHEGKIWFHGKISKQEAYNLLMTVGQVCSFLVRPSDNTPGDYSLYFRTNENIQRFKICPTPNNQFMMGGRYYNSIGDIIDHYRKEQIVEGYYLKEPVPMQDQGQVLNDTVDGKEIYNTIRRKTKDAFYKNIVKKGYLLKKGKGKRWKNLYFILEGSDAQLIYFESEKRATKPKGLIDLSVCSVYVVHDSLFGRPNCFQIVVQHFSEEHYIFYFAGETPEQAEDWMKGLQAFCSLRKSSPGTSNKRLRQVSSLVLHIEEAHKLPVKHFTNPYCNIYLNSVQVAKTHAREGQNPVWSEEFVFDDLPPDINRFEITLSNKTKKSKDPDILFMRCQLSRLQKGHATDEWFLLSSHIPLKGIEPGSLRVRARYSMEKIMPEEEYSEFKELILQKELHVVYALSHVCGQDRTLLASILLKIFLHEKLESLLLCTLNDREISMEDEATTLFRATTLASTLMEQYMKATATQFVHHALKDSILKIMESKQSCELSPSKLEKNEDVNTNLAHLLSILSELVEKIFMASEILPPTLRYIYGCLQKSVQHKWPTNNTMRTRVVSGFVFLRLICPAILNPRMFNIISDSPSPIAARTLTLVAKSVQNLANLVEFGAKEPYMEGVNPFIKSNKHRMIMFLDELGNVPELPDTTEHSRTDLSRDLAALHEICVAHSDELRTLSNERGVQQHVLKKLLAITELLQQKQNQYTKTNDVR.

Methionine 1 carries the N-acetylmethionine modification. Residues 1 to 16 show a composition bias toward low complexity; the sequence is MMAAEAGSEEGGPATA. Disordered stretches follow at residues 1-24 and 117-152; these read MMAA…AAAT and ETLG…SLDG. Positions 124 to 135 are enriched in pro residues; sequence GFPPLPPPPLLP. The 92-residue stretch at 172–263 folds into the SH2 1 domain; sequence WYHGKLDRTI…LKGEKLLYPV (92 aa). In terms of domain architecture, SH3 spans 270 to 332; the sequence is EDRRRVRAIL…VEDLVEEVGR (63 aa). One can recognise an SH2 2 domain in the interval 342-432; the sequence is WFHGKISKQE…VEGYYLKEPV (91 aa). Residues 465–568 enclose the PH domain; the sequence is NIVKKGYLLK…WMKGLQAFCS (104 aa). Positions 568–681 constitute a C2 domain; sequence SLRKSSPGTS…QKGHATDEWF (114 aa). Tyrosine 606 is subject to Phosphotyrosine. In terms of domain architecture, Ras-GAP spans 755-965; sequence KLESLLLCTL…HRMIMFLDEL (211 aa). Residue serine 822 is modified to Phosphoserine.

In terms of assembly, interacts with SQSTM1. Interacts with SPSB1; the interaction does not promote degradation. Interacts with CAV2 (tyrosine phosphorylated form). Directly interacts with NCK1. Interacts with PDGFRB (tyrosine phosphorylated). Interacts (via SH2 domain) with the 'Tyr-9' phosphorylated form of PDPK1. Interacts with tyrosine-phosphorylated EPHB4. Phosphorylated by SRC and LCK. The phosphorylation SRC inhibits its ability to stimulate the Ras-GTPase activity, whereas phosphorylation by LCK does not display any effect on stimulation activity.

It localises to the cytoplasm. In terms of biological role, inhibitory regulator of the Ras-cyclic AMP pathway. Stimulates the GTPase of normal but not oncogenic Ras p21. The protein is Ras GTPase-activating protein 1 (Rasa1) of Rattus norvegicus (Rat).